A 118-amino-acid chain; its full sequence is Large ribosomal subunit protein bL20 (118 aa).

It belongs to the bacterial ribosomal protein bL20 family.

Functionally, binds directly to 23S ribosomal RNA and is necessary for the in vitro assembly process of the 50S ribosomal subunit. It is not involved in the protein synthesizing functions of that subunit. This is Large ribosomal subunit protein bL20 from Bacillus mycoides (strain KBAB4) (Bacillus weihenstephanensis).